A 616-amino-acid chain; its full sequence is Proline--tRNA ligase (616 aa).

Belongs to the class-II aminoacyl-tRNA synthetase family. ProS type 1 subfamily. As to quaternary structure, homodimer.

It localises to the cytoplasm. It carries out the reaction tRNA(Pro) + L-proline + ATP = L-prolyl-tRNA(Pro) + AMP + diphosphate. Its function is as follows. Catalyzes the attachment of proline to tRNA(Pro) in a two-step reaction: proline is first activated by ATP to form Pro-AMP and then transferred to the acceptor end of tRNA(Pro). As ProRS can inadvertently accommodate and process non-cognate amino acids such as alanine and cysteine, to avoid such errors it has two additional distinct editing activities against alanine. One activity is designated as 'pretransfer' editing and involves the tRNA(Pro)-independent hydrolysis of activated Ala-AMP. The other activity is designated 'posttransfer' editing and involves deacylation of mischarged Ala-tRNA(Pro). The misacylated Cys-tRNA(Pro) is not edited by ProRS. The protein is Proline--tRNA ligase of Streptococcus sanguinis (strain SK36).